The sequence spans 76 residues: Translation initiation factor IF-1 (76 aa).

Residues 1–76 (MEDMAKKDGV…TRGRIVYRYK (76 aa)) form the S1-like domain.

It belongs to the IF-1 family. In terms of assembly, component of the 30S ribosomal translation pre-initiation complex which assembles on the 30S ribosome in the order IF-2 and IF-3, IF-1 and N-formylmethionyl-tRNA(fMet); mRNA recruitment can occur at any time during PIC assembly.

The protein localises to the cytoplasm. One of the essential components for the initiation of protein synthesis. Stabilizes the binding of IF-2 and IF-3 on the 30S subunit to which N-formylmethionyl-tRNA(fMet) subsequently binds. Helps modulate mRNA selection, yielding the 30S pre-initiation complex (PIC). Upon addition of the 50S ribosomal subunit IF-1, IF-2 and IF-3 are released leaving the mature 70S translation initiation complex. This Renibacterium salmoninarum (strain ATCC 33209 / DSM 20767 / JCM 11484 / NBRC 15589 / NCIMB 2235) protein is Translation initiation factor IF-1.